A 235-amino-acid polypeptide reads, in one-letter code: Uracil-DNA glycosylase (235 aa).

D71 (proton acceptor) is an active-site residue.

It belongs to the uracil-DNA glycosylase (UDG) superfamily. UNG family.

It localises to the cytoplasm. The enzyme catalyses Hydrolyzes single-stranded DNA or mismatched double-stranded DNA and polynucleotides, releasing free uracil.. Its function is as follows. Excises uracil residues from the DNA which can arise as a result of misincorporation of dUMP residues by DNA polymerase or due to deamination of cytosine. This is Uracil-DNA glycosylase from Campylobacter hominis (strain ATCC BAA-381 / DSM 21671 / CCUG 45161 / LMG 19568 / NCTC 13146 / CH001A).